The sequence spans 466 residues: ATP-dependent protease ATPase subunit HslU (466 aa).

ATP is bound by residues Ile18, 60–65 (GVGKTE), Asp279, Glu344, and Arg416.

Belongs to the ClpX chaperone family. HslU subfamily. In terms of assembly, a double ring-shaped homohexamer of HslV is capped on each side by a ring-shaped HslU homohexamer. The assembly of the HslU/HslV complex is dependent on binding of ATP.

It is found in the cytoplasm. Functionally, ATPase subunit of a proteasome-like degradation complex; this subunit has chaperone activity. The binding of ATP and its subsequent hydrolysis by HslU are essential for unfolding of protein substrates subsequently hydrolyzed by HslV. HslU recognizes the N-terminal part of its protein substrates and unfolds these before they are guided to HslV for hydrolysis. The polypeptide is ATP-dependent protease ATPase subunit HslU (Lactobacillus acidophilus (strain ATCC 700396 / NCK56 / N2 / NCFM)).